The following is a 147-amino-acid chain: Nucleoside diphosphate kinase (147 aa).

Residues lysine 9, phenylalanine 57, arginine 85, threonine 91, arginine 102, and asparagine 112 each contribute to the ATP site. Histidine 115 functions as the Pros-phosphohistidine intermediate in the catalytic mechanism.

Belongs to the NDK family. As to quaternary structure, homotetramer. Mg(2+) is required as a cofactor.

It localises to the cytoplasm. The enzyme catalyses a 2'-deoxyribonucleoside 5'-diphosphate + ATP = a 2'-deoxyribonucleoside 5'-triphosphate + ADP. It catalyses the reaction a ribonucleoside 5'-diphosphate + ATP = a ribonucleoside 5'-triphosphate + ADP. Major role in the synthesis of nucleoside triphosphates other than ATP. The ATP gamma phosphate is transferred to the NDP beta phosphate via a ping-pong mechanism, using a phosphorylated active-site intermediate. This is Nucleoside diphosphate kinase from Thermosipho melanesiensis (strain DSM 12029 / CIP 104789 / BI429).